Here is a 146-residue protein sequence, read N- to C-terminus: 3-hydroxyacyl-[acyl-carrier-protein] dehydratase FabZ (146 aa).

H48 is an active-site residue.

The protein belongs to the thioester dehydratase family. FabZ subfamily.

It is found in the cytoplasm. The catalysed reaction is a (3R)-hydroxyacyl-[ACP] = a (2E)-enoyl-[ACP] + H2O. Its function is as follows. Involved in unsaturated fatty acids biosynthesis. Catalyzes the dehydration of short chain beta-hydroxyacyl-ACPs and long chain saturated and unsaturated beta-hydroxyacyl-ACPs. In Acetivibrio thermocellus (strain ATCC 27405 / DSM 1237 / JCM 9322 / NBRC 103400 / NCIMB 10682 / NRRL B-4536 / VPI 7372) (Clostridium thermocellum), this protein is 3-hydroxyacyl-[acyl-carrier-protein] dehydratase FabZ.